A 221-amino-acid chain; its full sequence is Probable transaldolase (221 aa).

Residue lysine 87 is the Schiff-base intermediate with substrate of the active site.

This sequence belongs to the transaldolase family. Type 3B subfamily.

The protein localises to the cytoplasm. The enzyme catalyses D-sedoheptulose 7-phosphate + D-glyceraldehyde 3-phosphate = D-erythrose 4-phosphate + beta-D-fructose 6-phosphate. It participates in carbohydrate degradation; pentose phosphate pathway; D-glyceraldehyde 3-phosphate and beta-D-fructose 6-phosphate from D-ribose 5-phosphate and D-xylulose 5-phosphate (non-oxidative stage): step 2/3. Its function is as follows. Transaldolase is important for the balance of metabolites in the pentose-phosphate pathway. The sequence is that of Probable transaldolase from Syntrophobacter fumaroxidans (strain DSM 10017 / MPOB).